Consider the following 123-residue polypeptide: MILGLGIDIVEVSRLEKWLNDKKLLERFFNKEELEYVLSKRDGAAPSLAVRFAAKEAFGKALGTGLAGIELKDIAVANDKTGRPFLELFGTALQALKEKGGASIHLSLTHEKTTAAAVVIIEG.

Mg(2+) contacts are provided by aspartate 8 and glutamate 56.

It belongs to the P-Pant transferase superfamily. AcpS family. Mg(2+) is required as a cofactor.

It is found in the cytoplasm. The catalysed reaction is apo-[ACP] + CoA = holo-[ACP] + adenosine 3',5'-bisphosphate + H(+). In terms of biological role, transfers the 4'-phosphopantetheine moiety from coenzyme A to a Ser of acyl-carrier-protein. In Treponema denticola (strain ATCC 35405 / DSM 14222 / CIP 103919 / JCM 8153 / KCTC 15104), this protein is Holo-[acyl-carrier-protein] synthase.